The primary structure comprises 389 residues: MEFPLAQICPQGSHEAPIPTFSTFQITDMTRRSCQNLGYTAASPQAPEAASNTGNAERAEEVPGEGSLFLQAETRAWFQKTQAHWLLQHGAAPAWFHGFITRREAERLLEPKPQGCYLVRFSESAVTFVLTYRSRTCCRHFLLAQLRDGRHVVLGEDSAHARLQDLLLHYTAHPLSPYGETLTEPLARQTPEPAGLSLRTEESNFGSKSQDPNPQYSPIIKQGQAPVPMQKEGAGEKEPSQLLRPKPPIPAKPQLPPEVYTIPVPRHRPAPRPKPSNPIYNEPDEPIAFYAMGRGSPGEAPSNIYVEVEDEGLPATLGHPVLRKSWSRPVPGGQNTGGSQLHSENSVIGQGPPLPHQPPPAWRHTLPHNLSRQVLQDRGQAWLPLGPPQ.

The interval 41-63 is disordered; that stretch reads AASPQAPEAASNTGNAERAEEVP. The region spanning 95-186 is the SH2 domain; sequence WFHGFITRRE…PYGETLTEPL (92 aa). The interval 190–295 is disordered; sequence TPEPAGLSLR…PIAFYAMGRG (106 aa). Over residues 203–216 the composition is skewed to polar residues; that stretch reads SNFGSKSQDPNPQY. Ser217 carries the phosphoserine modification. 2 consecutive short sequence motifs (SH3-binding) follow at residues 244-250 and 272-278; these read RPKPPIP and RPKPSNP. Over residues 245 to 256 the composition is skewed to pro residues; the sequence is PKPPIPAKPQLP. Phosphoserine is present on Ser296. A disordered region spans residues 324 to 389; it reads KSWSRPVPGG…QAWLPLGPPQ (66 aa). The span at 337–348 shows a compositional bias: polar residues; sequence GGSQLHSENSVI. Positions 352 to 361 are enriched in pro residues; that stretch reads PPLPHQPPPA.

In terms of assembly, interacts with KDR. Interacts with TXK and ITK. Phosphorylated on tyrosine residues. As to expression, expression limited to tissues of the immune system and, in particular, activated T-cells. Expressed in peripheral blood leukocytes, thymus and spleen. Much lower expression or undetectable, in brain, placenta, skeletal muscle, prostate, testis, ovary, small intestine, and colon. Expressed at low levels in unstimulated T-cells, but not expressed in normal resting or activated B-cells. According to PubMed:10692392, expression is not restricted to activated T-cells, but strongly expressed in blood cell lineages, the endothelium and other cell and tissue types, such as heart, lung, and liver.

Its subcellular location is the cytoplasm. In terms of biological role, could be a T-cell-specific adapter protein involved in the control of T-cell activation. May play a role in the CD4-p56-LCK-dependent signal transduction pathway. Could also play an important role in normal and pathological angiogenesis. Could be an adapter protein that facilitates and regulates interaction of KDR with effector proteins important to endothelial cell survival and proliferation. The polypeptide is SH2 domain-containing protein 2A (SH2D2A) (Homo sapiens (Human)).